Consider the following 149-residue polypeptide: Transcriptional repressor NrdR (149 aa).

Residues 3–34 (CPFCSATDTKVIDSRLVSDGHQVRRRRQCLAC) fold into a zinc finger. Residues 49–139 (PKVIKSNGNR…VYRSFEDIKE (91 aa)) enclose the ATP-cone domain.

It belongs to the NrdR family. It depends on Zn(2+) as a cofactor.

In terms of biological role, negatively regulates transcription of bacterial ribonucleotide reductase nrd genes and operons by binding to NrdR-boxes. This chain is Transcriptional repressor NrdR, found in Aliivibrio fischeri (strain ATCC 700601 / ES114) (Vibrio fischeri).